We begin with the raw amino-acid sequence, 379 residues long: Putative cyclic ADP-D-ribose synthase TIR2 (379 aa).

The TIR domain maps to 254 to 379 (KVYDVFISHS…TISWTTGLVK (126 aa)). Glu335 is a catalytic residue.

Homodimer.

It is found in the cytoplasm. Its activity is regulated as follows. Activated upon phage infection. In terms of biological role, one of 2 TIR-like protein components of the Thoeris antiviral defense system, composed of ThsA, TIR1 (thsB1) and TIR2 (thsB2). Phage infection activates this protein; by 70 minutes post-infection with phage SPO1, TIR2 generates a signal molecule that in turn activates the NAD(+) hydrolase activity of ThsA (tested with B.cereus). The signal is similar to cyclic ADP-D-ribose, but how it differs is unknown. Expression of Thoeris in B.subtilis (strain BEST7003) confers resistance to phages phi29, phi3T, SPBeta, SBSphi11, SBSphi13, SBSphiJ, SPO1 and SPR but not SBSphiC. The TIR paralogs confer resistance to different phages; this subunit confers resistance to phi3T, SPBeta, SBSphi13, SBSphiJ, SPO1 and SPR but not phi29, SBSphi11 or SBSphiC. There is overlap in the phage range for this system, both TIR1 and TIR2 are activated by SBSphi13, SBSphiJ, SPO1 and SPR. Probably hydrolyzes NAD(+) to make a cyclic ADP-D-ribose (cADPR) signaling molecule; might make 3'cADPR. The sequence is that of Putative cyclic ADP-D-ribose synthase TIR2 from Cytobacillus dafuensis (Bacillus dafuensis).